The following is a 588-amino-acid chain: Histone-arginine methyltransferase CARM1 (588 aa).

In terms of domain architecture, SAM-dependent MTase PRMT-type spans 120–427 (AVQYFQFYGY…KRQSYDISIV (308 aa)). Residues glutamine 133, arginine 142, glycine 166, glutamate 188, glutamate 217, and serine 245 each coordinate S-adenosyl-L-methionine. The tract at residues 473-588 (TGGTYSMSQG…IPSNTMHYGS (116 aa)) is transactivation domain.

Belongs to the class I-like SAM-binding methyltransferase superfamily. Protein arginine N-methyltransferase family. Homodimer.

The protein localises to the nucleus. It localises to the cytoplasm. Its subcellular location is the chromosome. The catalysed reaction is L-arginyl-[protein] + 2 S-adenosyl-L-methionine = N(omega),N(omega)-dimethyl-L-arginyl-[protein] + 2 S-adenosyl-L-homocysteine + 2 H(+). Its function is as follows. Methylates (mono- and asymmetric dimethylation) the guanidino nitrogens of arginyl residues in several proteins involved in DNA packaging, transcription regulation, pre-mRNA splicing, and mRNA stability. Recruited to promoters upon gene activation together with histone acetyltransferases from EP300/P300 and p160 families, methylates histone H3 at 'Arg-17' (H3R17me) and activates transcription via chromatin remodeling. The sequence is that of Histone-arginine methyltransferase CARM1 (carm1) from Danio rerio (Zebrafish).